A 71-amino-acid polypeptide reads, in one-letter code: DNA-directed RNA polymerase subunit epsilon (71 aa).

The protein belongs to the RNA polymerase subunit epsilon family. RNAP is composed of a core of 2 alpha, a beta and a beta' subunit. The core is associated with a delta subunit, and at least one of epsilon or omega. When a sigma factor is associated with the core the holoenzyme is formed, which can initiate transcription.

The catalysed reaction is RNA(n) + a ribonucleoside 5'-triphosphate = RNA(n+1) + diphosphate. Its function is as follows. A non-essential component of RNA polymerase (RNAP). The sequence is that of DNA-directed RNA polymerase subunit epsilon from Geobacillus thermodenitrificans (strain NG80-2).